The sequence spans 501 residues: Bifunctional purine biosynthesis protein PurH (501 aa).

The MGS-like domain occupies 1 to 144; sequence MKKRALISVF…KNFKDVVVLS (144 aa).

The protein belongs to the PurH family.

The enzyme catalyses (6R)-10-formyltetrahydrofolate + 5-amino-1-(5-phospho-beta-D-ribosyl)imidazole-4-carboxamide = 5-formamido-1-(5-phospho-D-ribosyl)imidazole-4-carboxamide + (6S)-5,6,7,8-tetrahydrofolate. It carries out the reaction IMP + H2O = 5-formamido-1-(5-phospho-D-ribosyl)imidazole-4-carboxamide. It functions in the pathway purine metabolism; IMP biosynthesis via de novo pathway; 5-formamido-1-(5-phospho-D-ribosyl)imidazole-4-carboxamide from 5-amino-1-(5-phospho-D-ribosyl)imidazole-4-carboxamide (10-formyl THF route): step 1/1. It participates in purine metabolism; IMP biosynthesis via de novo pathway; IMP from 5-formamido-1-(5-phospho-D-ribosyl)imidazole-4-carboxamide: step 1/1. The protein is Bifunctional purine biosynthesis protein PurH of Clostridium perfringens (strain ATCC 13124 / DSM 756 / JCM 1290 / NCIMB 6125 / NCTC 8237 / Type A).